Reading from the N-terminus, the 341-residue chain is S-adenosylmethionine:tRNA ribosyltransferase-isomerase (341 aa).

Belongs to the QueA family. Monomer.

The protein resides in the cytoplasm. It catalyses the reaction 7-aminomethyl-7-carbaguanosine(34) in tRNA + S-adenosyl-L-methionine = epoxyqueuosine(34) in tRNA + adenine + L-methionine + 2 H(+). Its pathway is tRNA modification; tRNA-queuosine biosynthesis. Transfers and isomerizes the ribose moiety from AdoMet to the 7-aminomethyl group of 7-deazaguanine (preQ1-tRNA) to give epoxyqueuosine (oQ-tRNA). The sequence is that of S-adenosylmethionine:tRNA ribosyltransferase-isomerase from Staphylococcus epidermidis (strain ATCC 12228 / FDA PCI 1200).